A 552-amino-acid polypeptide reads, in one-letter code: Rqc2 homolog RqcH (552 aa).

Coiled-coil stretches lie at residues 271–317 and 357–398; these read RDRV…QKGE and NAQR…MLGQ.

It belongs to the NEMF family. In terms of assembly, associates with stalled 50S ribosomal subunits, binds to RqcH. Recombinant protein interacts with the N-terminal 30 kDa of human fibronectin (FN1).

Functionally, key component of the ribosome quality control system (RQC), a ribosome-associated complex that mediates the extraction of incompletely synthesized nascent chains from stalled ribosomes and their subsequent degradation. RqcH recruits Ala-charged tRNA, and with RqcP directs the elongation of stalled nascent chains on 50S ribosomal subunits, leading to non-templated C-terminal alanine extensions (Ala tail). The Ala tail promotes nascent chain degradation. May add between 1 and at least 8 Ala residues. Binds to stalled 50S ribosomal subunits. This chain is Rqc2 homolog RqcH, found in Streptococcus suis (strain 05ZYH33).